The following is a 746-amino-acid chain: H(+)/Cl(-) exchange transporter 5 (746 aa).

Residues 1–54 (MDFLEEPIPGVGTYDDFNTIDWVREKSRDRDRHREITNRSKESTWALIHSVSDA) are Cytoplasmic-facing. The next 2 helical transmembrane spans lie at 55 to 92 (FSGWLLMLLIGLLSGSLAGLIDISAHWMTDLKEGICTE) and 138 to 161 (VNYFMYVLWALLFAFLAVSLVKVF). Residues 167–171 (GSGIP) carry the Selectivity filter part_1 motif. S168 contacts chloride. Residues 170–177 (IPEIKTIL) constitute an intramembrane region (helical). 2 consecutive transmembrane segments (helical) span residues 186 to 205 (LGKWTLIIKTITLVLAVSSG) and 211 to 230 (EGPLVHVACCCGNILCHCFN). The short motif at 209 to 213 (GKEGP) is the Selectivity filter part_2 element. Intramembrane regions (helical) lie at residues 242 to 254 (VLSAAAAAGVSVA) and 258 to 266 (PIGGVLFSL). Helical transmembrane passes span 278 to 296 (LWRSFFAALVAAFTLRSIN), 319 to 344 (LVPFILLGIFGGLWGALFIRTNIAWC), 352 to 372 (LGKYPVIEVLIVTAITAILAF), 428 to 448 (MWQLALTLILKIVITIFTFGM), and 453 to 472 (GLFIPSMAVGAIAGRLLGVG). The short motif at 453–457 (GLFIP) is the Selectivity filter part_3 element. F455 provides a ligand contact to chloride. Residues 500–514 (GLYAMVGAAACLGGV) constitute an intramembrane region (helical). The segment at residues 515 to 517 (TRM) is an intramembrane region (note=Loop between two helices). An intramembrane region (helical) is located at residues 518 to 529 (TVSLVVIMFELT). The segment at residues 530–534 (GGLEY) is an intramembrane region (note=Loop between two helices). The helical transmembrane segment at 535–552 (IVPLMAAAMTSKWVADAL) threads the bilayer. Over 553-746 (GREGIYDAHI…NQDPDSILFN (194 aa)) the chain is Cytoplasmic. Residue Y558 participates in chloride binding. 2 consecutive CBS domains span residues 586–650 (MKPR…ARKE) and 682–742 (ILDL…DPDS). Residues T596, 617-619 (YSG), and 724-727 (TKKD) contribute to the ATP site.

Belongs to the chloride channel (TC 2.A.49) family. ClC-5/CLCN5 subfamily. As to quaternary structure, interacts with NEDD4 and NEDD4L. Post-translationally, ubiquitinated by NEDD4L in the presence of albumin; which promotes endocytosis and proteasomal degradation. Detected in duodenum, jejunum and ileum. Detected in crypt and villus regions of the epithelium of the small intestine.

Its subcellular location is the golgi apparatus membrane. The protein resides in the endosome membrane. The protein localises to the cell membrane. The catalysed reaction is 2 chloride(in) + H(+)(out) = 2 chloride(out) + H(+)(in). Functionally, proton-coupled chloride transporter. Functions as antiport system and exchanges chloride ions against protons. Important for normal acidification of the endosome lumen. May play an important role in renal tubular function. The CLC channel family contains both chloride channels and proton-coupled anion transporters that exchange chloride or another anion for protons. The absence of conserved gating glutamate residues is typical for family members that function as channels. In Cavia porcellus (Guinea pig), this protein is H(+)/Cl(-) exchange transporter 5 (CLCN5).